The primary structure comprises 267 residues: uncharacterized protein (267 aa).

Residues 1-55 (MTEERKETFEEEINQSERIDADEEPLSRMSRKASRQSKQKQKQKQKPRQERGEST) are disordered. A compositionally biased stretch (acidic residues) spans 9–24 (FEEEINQSERIDADEE). The span at 29–46 (MSRKASRQSKQKQKQKQK) shows a compositional bias: basic residues. A run of 5 helical transmembrane segments spans residues 93–115 (YKYGLISMLIFSIIFSIGNWFQL), 135–157 (GFLVVLVYLLIFFAVMVFAIWAV), 173–195 (AVLGSLLVPVIAVSILWLIFAIV), 199–221 (MLTVLFTVLILFSIFFIIALYVQ), and 234–256 (YIYCVFAVVAIALLFTAVTWPFI).

It localises to the cell membrane. This is an uncharacterized protein from Bacillus subtilis (strain 168).